A 577-amino-acid chain; its full sequence is Arginine--tRNA ligase (577 aa).

A 'HIGH' region motif is present at residues 122–132 (PNVAKEMHVGH).

This sequence belongs to the class-I aminoacyl-tRNA synthetase family. Monomer.

It localises to the cytoplasm. The enzyme catalyses tRNA(Arg) + L-arginine + ATP = L-arginyl-tRNA(Arg) + AMP + diphosphate. The sequence is that of Arginine--tRNA ligase from Vibrio vulnificus (strain YJ016).